Reading from the N-terminus, the 241-residue chain is Uridylate kinase (241 aa).

12 to 15 (KLSG) is a binding site for ATP. An involved in allosteric activation by GTP region spans residues 20–25 (GDKGQG). Residue Gly54 coordinates UMP. Gly55 and Arg59 together coordinate ATP. Residues Asp74 and 135 to 142 (TGSPYFST) contribute to the UMP site. Positions 163, 169, and 172 each coordinate ATP.

Belongs to the UMP kinase family. Homohexamer.

It is found in the cytoplasm. The enzyme catalyses UMP + ATP = UDP + ADP. Its pathway is pyrimidine metabolism; CTP biosynthesis via de novo pathway; UDP from UMP (UMPK route): step 1/1. Its activity is regulated as follows. Allosterically activated by GTP. Inhibited by UTP. Its function is as follows. Catalyzes the reversible phosphorylation of UMP to UDP. This chain is Uridylate kinase, found in Leuconostoc mesenteroides subsp. mesenteroides (strain ATCC 8293 / DSM 20343 / BCRC 11652 / CCM 1803 / JCM 6124 / NCDO 523 / NBRC 100496 / NCIMB 8023 / NCTC 12954 / NRRL B-1118 / 37Y).